Reading from the N-terminus, the 577-residue chain is Multidrug transporter TPO1_2 (577 aa).

The disordered stretch occupies residues 1-63; it reads MSSTSSDRPY…ALSKNSTQTS (63 aa). N-linked (GlcNAc...) asparagine glycosylation is found at Asn-44 and Asn-58. A run of 12 helical transmembrane segments spans residues 137–157, 167–187, 204–224, 234–254, 263–283, 293–313, 368–388, 406–426, 446–466, 475–495, 504–526, and 541–561; these read VMLCIILCLNCISITMGSSIF, IYHVIPVVAILGITLYVLGFA, GVLVISSFGFALFNFAVATAK, FFAGFIGAAPLAVVPAAFADM, AICLFSLGVFVGPILAPVIGS, WLEYVIACFASAIFVAILFFF, PLLLIVTIYNSFVYGILYLLL, ELPYISLIIGMAICGAFIWWM, LLPMVVAGIVFPIGILWFCWT, WIVPTIAGAFTGFGLIGIFLP, YLLIAASAVAANTFMRSGFGAAF, and YAGLLLGLLAVAMIPVPLLFL.

It belongs to the major facilitator superfamily. DHA1 family. Polyamines/proton antiporter (TC 2.A.1.2.16) subfamily.

The protein localises to the cell membrane. Multidrug resistance transporter involved in resistance to azole antifungal drugs such as the imidazoles miconazole, ketoconazole, and tioconazole; as well as the triazoles itraconazole and fluconazole. Also plays a role in the resistance to other antifungal drug families such as the polyene amphotericin B, the pyrimide analog flucytosine, the fungicide mancozeb, and the polyamine spermine. Decreases the intracellular accumulation of clotrimazole by mediating its extrusion from cells. Plays a role in biofilm formation. In Candida glabrata (strain ATCC 2001 / BCRC 20586 / JCM 3761 / NBRC 0622 / NRRL Y-65 / CBS 138) (Yeast), this protein is Multidrug transporter TPO1_2.